The following is a 331-amino-acid chain: MRPISLRLHERPITQVLFNREGDLLFVAAKDKLVSLWYTTNGERIGSYQCGGVVYSIDVSQDSKYLITASADAKARVWDVSSGRQLDSTDFEVSARSIEFSQGDKQILVVTDQVMGCQAKIHVFDFDKDEVRKLNKSYTLPSPQCKITQATWGPLNKTIFASCEDGAVRIYCTEKRELIKTILDHNKLVTRIEWTKHRIMFMTCSKDGTAKLYDTKTLKLLRTFDTGRPINAAGISPLKPHVILGGGQSAESVTTTKVDASQFKVRFFHIVYGEELGGLIGHIGPVHSICFTPDGKTFATGGEEGLVQVNHLDESYFEFDDDLVYNPPVQH.

WD repeat units follow at residues 8-47 (LHER…RIGS), 49-88 (QCGG…QLDS), 142-181 (SPQC…LIKT), 184-223 (DHNK…LLRT), and 281-320 (GHIG…FEFD).

It belongs to the eIF-3 subunit I family. In terms of assembly, component of the eukaryotic translation initiation factor 3 (eIF-3) complex.

Its subcellular location is the cytoplasm. In terms of biological role, component of the eukaryotic translation initiation factor 3 (eIF-3) complex, which is involved in protein synthesis of a specialized repertoire of mRNAs and, together with other initiation factors, stimulates binding of mRNA and methionyl-tRNAi to the 40S ribosome. The eIF-3 complex specifically targets and initiates translation of a subset of mRNAs involved in cell proliferation. This Dictyostelium discoideum (Social amoeba) protein is Eukaryotic translation initiation factor 3 subunit I (eif3I).